The primary structure comprises 132 residues: Fatty acid-binding protein, liver (132 aa).

V1 bears the N-acetylvaline mark. Y19 bears the Phosphotyrosine; by Tyr-kinases mark.

The protein belongs to the calycin superfamily. Fatty-acid binding protein (FABP) family.

The protein resides in the cytoplasm. In terms of biological role, FABPs are thought to play a role in the intracellular transport of long-chain fatty acids and their acyl-CoA esters. The protein is Fatty acid-binding protein, liver of Ginglymostoma cirratum (Nurse shark).